A 381-amino-acid polypeptide reads, in one-letter code: Putative MgpC-like protein MPN_503 (381 aa).

A disordered region spans residues 1–109; it reads MNGVAQDKVH…TDSQQSGHNS (109 aa). Residues 13-31 are compositionally biased toward polar residues; it reads EQTTQWNQQASQKNLTNNP. Composition is skewed to basic and acidic residues over residues 40–51 and 61–73; these read KLDKGRAYRKLN and DSTK…DKDG. Over residues 89–109 the composition is skewed to polar residues; it reads VSSTESQMAAVTDSQQSGHNS.

Belongs to the MgpC family.

The polypeptide is Putative MgpC-like protein MPN_503 (Mycoplasma pneumoniae (strain ATCC 29342 / M129 / Subtype 1) (Mycoplasmoides pneumoniae)).